A 292-amino-acid chain; its full sequence is Probable endonuclease 4 (292 aa).

9 residues coordinate Zn(2+): H70, H111, E146, D180, H183, H215, D228, H230, and E260.

It belongs to the AP endonuclease 2 family. The cofactor is Zn(2+).

It carries out the reaction Endonucleolytic cleavage to 5'-phosphooligonucleotide end-products.. Functionally, endonuclease IV plays a role in DNA repair. It cleaves phosphodiester bonds at apurinic or apyrimidinic (AP) sites, generating a 3'-hydroxyl group and a 5'-terminal sugar phosphate. This is Probable endonuclease 4 from Shouchella clausii (strain KSM-K16) (Alkalihalobacillus clausii).